The sequence spans 32 residues: Photosystem II reaction center protein T (32 aa).

Residues 3–23 (ALVYVFLLIGTLMIIFFAIFF) form a helical membrane-spanning segment.

It belongs to the PsbT family. PSII is composed of 1 copy each of membrane proteins PsbA, PsbB, PsbC, PsbD, PsbE, PsbF, PsbH, PsbI, PsbJ, PsbK, PsbL, PsbM, PsbT, PsbY, PsbZ, Psb30/Ycf12, at least 3 peripheral proteins of the oxygen-evolving complex and a large number of cofactors. It forms dimeric complexes.

Its subcellular location is the plastid. It localises to the chloroplast thylakoid membrane. In terms of biological role, found at the monomer-monomer interface of the photosystem II (PS II) dimer, plays a role in assembly and dimerization of PSII. PSII is a light-driven water plastoquinone oxidoreductase, using light energy to abstract electrons from H(2)O, generating a proton gradient subsequently used for ATP formation. The chain is Photosystem II reaction center protein T from Cyanidioschyzon merolae (strain NIES-3377 / 10D) (Unicellular red alga).